A 341-amino-acid chain; its full sequence is MDLDRLDLNPRIVAAVKKAKLRSVKEVLHLSGPDLQRRTHLSSPDVQLLLRASASLLRGHGVCTALHLLRQEGPFPEQHQRLSLGCPVLDALLRGGLPLDGITELAGRSSAGKTQLALQLCLAVQLPPRHGGLGAGAVYVCTEDAFPSRRLQQLIAQQQRLRADVPGHVISKIRFGHQIFIEHAADVDTLLQCVREKVPVLLARGMARLVVIDSVAAPFRCEFDGAALALRAQRLLALGAELRRLSCAFRSPVLCVNQVTEAVEEQDLVAGPPGMSPALGITWANQLLVRLLADRQRPEEAPLTPPGRTLRVVFAPHLPASSCSYTIAAEGVRGMPGTACS.

Met-1 bears the N-acetylmethionine mark. An ATP-binding site is contributed by 107 to 114 (GRSSAGKT).

The protein belongs to the RecA family. RAD51 subfamily. As to quaternary structure, interacts with RAD51C and RAD51. Part of the CX3 complex consisting of RAD51C and XRCC3; the complex has a ring-like structure arranged into a flat disc around a central channel; CX3 can interact with RAD51 in vitro. Forms a complex with FANCD2, BRCA2 and phosphorylated FANCG. Interacts with SWSAP1 and ZSWIM7; involved in homologous recombination repair. Interacts directly with PALB2 which may serve as a scaffold for a HR complex containing PALB2, BRCA2, RAD51C, RAD51 and XRCC3.

Its subcellular location is the nucleus. The protein resides in the cytoplasm. It is found in the perinuclear region. The protein localises to the mitochondrion matrix. Functionally, involved in the homologous recombination repair (HRR) pathway of double-stranded DNA, thought to repair chromosomal fragmentation, translocations and deletions. Part of the RAD21 paralog protein complex CX3 which acts in the BRCA1-BRCA2-dependent HR pathway. Upon DNA damage, CX3 acts downstream of RAD51 recruitment; the complex binds predominantly to the intersection of the four duplex arms of the Holliday junction (HJ) and to junctions of replication forks. Involved in HJ resolution and thus in processing HR intermediates late in the DNA repair process; the function may be linked to the CX3 complex and seems to involve GEN1 during mitotic cell cycle progression. Part of a PALB2-scaffolded HR complex containing BRCA2 and RAD51C and which is thought to play a role in DNA repair by HR. Plays a role in regulating mitochondrial DNA copy number under conditions of oxidative stress in the presence of RAD51 and RAD51C. The sequence is that of DNA repair protein XRCC3 (XRCC3) from Bos taurus (Bovine).